The primary structure comprises 180 residues: UPF0227 protein YcfP (180 aa).

This sequence belongs to the UPF0227 family.

In Escherichia coli O9:H4 (strain HS), this protein is UPF0227 protein YcfP.